The primary structure comprises 1151 residues: PPi-type phosphoenolpyruvate carboxykinase 1 (1151 aa).

Residues 1083 to 1129 (RQKLEVAKLNKDLAYLNKTIAEKPRLAETLNKQIAAVKEELQYVSSE) adopt a coiled-coil conformation.

Belongs to the PPi-type phosphoenolpyruvate carboxykinase family. As to quaternary structure, monomer and trimer; forms heterotrimers with PEPCK2 and PEPCK3.

It is found in the cytoplasm. The protein localises to the cytosol. The enzyme catalyses oxaloacetate + diphosphate = phosphoenolpyruvate + phosphate + CO2. Inorganic pyrophosphate (PPi)-dependent phosphoenolpyruvate carboxykinase, which regulates the carbon flow of the central metabolism by fixing CO(2) to phosphoenolpyruvate to produce oxaloacetate. Can also produce pyruvate and diphosphate from phosphoenolpyruvate and phosphate. The protein is PPi-type phosphoenolpyruvate carboxykinase 1 of Entamoeba histolytica (strain ATCC 30459 / HM-1:IMSS / ABRM).